Reading from the N-terminus, the 647-residue chain is Golgi-associated RAB2B interactor protein 3 (647 aa).

Residues 188–202 (IPTADTSTETKSTLV) are compositionally biased toward polar residues. 4 disordered regions span residues 188–220 (IPTADTSTETKSTLVSEIHGEGDRDSKFQTSQD), 267–296 (TAGAAGATGAAGATGAAGSARAAGGAGSAR), 361–384 (SKSPGSGQVATGLTGTASKDQERS), and 465–573 (RDGS…GFVS). The segment covering 205-214 (IHGEGDRDSK) has biased composition (basic and acidic residues). Over residues 361–378 (SKSPGSGQVATGLTGTAS) the composition is skewed to polar residues. S378 is modified (phosphoserine). Positions 478-491 (TQKEKRERRESDRK) are enriched in basic and acidic residues. The segment covering 492–501 (GSRKSSHHQR) has biased composition (basic residues). A Bipartite nuclear localization signal motif is present at residues 494-511 (RKSSHHQRTGASRHSSSK). Residues 528–556 (KTREDKKEKGRGSLRDQRHSSSYRSESRT) are compositionally biased toward basic and acidic residues. S634 and S636 each carry phosphoserine.

The protein belongs to the GARIN family. In terms of assembly, interacts (via N-terminus) with RAB2B (in GTP-bound form). Interacts with FRG1.

The protein localises to the golgi apparatus. It localises to the nucleus. The protein resides in the cajal body. In terms of biological role, may be involved in RNA biogenesis. The chain is Golgi-associated RAB2B interactor protein 3 (Garin3) from Rattus norvegicus (Rat).